Consider the following 87-residue polypeptide: Toxin CsEv2 (87 aa).

The N-terminal stretch at methionine 1–alanine 19 is a signal peptide. The LCN-type CS-alpha/beta domain occupies lysine 20–serine 85. Disulfide bonds link cysteine 31-cysteine 84, cysteine 35-cysteine 60, cysteine 44-cysteine 65, and cysteine 48-cysteine 67.

It belongs to the long (4 C-C) scorpion toxin superfamily. Sodium channel inhibitor family. Beta subfamily. As to expression, expressed by the venom gland.

Its subcellular location is the secreted. Beta toxins bind voltage-independently at site-4 of sodium channels (Nav) and shift the voltage of activation toward more negative potentials thereby affecting sodium channel activation and promoting spontaneous and repetitive firing. Induces immediate paralysis in crickets after injection, with a total paralysis occurring within 15-30 minutes and lasting for 1-2 hours. Is also lethal to vertebrate (chicks) when injected in very high dosages (more that 100 mg/kg). This is Toxin CsEv2 from Centruroides sculpturatus (Arizona bark scorpion).